A 441-amino-acid chain; its full sequence is GTPase Der (441 aa).

EngA-type G domains lie at 3 to 167 (PLIA…PNKT) and 176 to 351 (TRIA…EQFA). GTP is bound by residues 9 to 16 (GRPNVGKS), 56 to 60 (DTGGF), 119 to 122 (NKID), 182 to 189 (GRPNVGKS), 229 to 233 (DTAGI), and 294 to 297 (NKWD). Positions 352–436 (KRISTSDLNR…PMRLLFKGRE (85 aa)) constitute a KH-like domain.

The protein belongs to the TRAFAC class TrmE-Era-EngA-EngB-Septin-like GTPase superfamily. EngA (Der) GTPase family. Associates with the 50S ribosomal subunit.

GTPase that plays an essential role in the late steps of ribosome biogenesis. This chain is GTPase Der, found in Geotalea daltonii (strain DSM 22248 / JCM 15807 / FRC-32) (Geobacter daltonii).